A 556-amino-acid chain; its full sequence is Polypeptide N-acetylgalactosaminyltransferase 13 (556 aa).

Residues 1–4 (MRRL) are Cytoplasmic-facing. The chain crosses the membrane as a helical; Signal-anchor for type II membrane protein span at residues 5–27 (VYCKVVLATSLMWVLVDVFLLLY). Topologically, residues 28–556 (FSECNKCDDK…WLLRNMTLGT (529 aa)) are lumenal. 2 N-linked (GlcNAc...) asparagine glycosylation sites follow: N94 and N116. Disulfide bonds link C105/C338, C329/C407, C441/C458, C481/C496, and C522/C539. The segment at 114 to 224 (LPNTSVVIVF…LGWLEPLLAR (111 aa)) is catalytic subdomain A. Substrate is bound by residues D155 and R185. Mn(2+) is bound by residues D208 and H210. Positions 284–346 (PVRTPTMAGG…TCSHVGHVFR (63 aa)) are catalytic subdomain B. Residue W315 coordinates substrate. H343 provides a ligand contact to Mn(2+). Substrate is bound by residues R346 and Y351. A Ricin B-type lectin domain is found at 428–550 (YSLGEIRNVE…GSRSQQWLLR (123 aa)). A glycan (N-linked (GlcNAc...) asparagine) is linked at N551.

Belongs to the glycosyltransferase 2 family. GalNAc-T subfamily. Requires Mn(2+) as cofactor.

It is found in the golgi apparatus membrane. It catalyses the reaction L-seryl-[protein] + UDP-N-acetyl-alpha-D-galactosamine = a 3-O-[N-acetyl-alpha-D-galactosaminyl]-L-seryl-[protein] + UDP + H(+). It carries out the reaction L-threonyl-[protein] + UDP-N-acetyl-alpha-D-galactosamine = a 3-O-[N-acetyl-alpha-D-galactosaminyl]-L-threonyl-[protein] + UDP + H(+). It functions in the pathway protein modification; protein glycosylation. Catalyzes the initial reaction in O-linked oligosaccharide biosynthesis, the transfer of an N-acetyl-D-galactosamine (GalNAc) residue from UDP-GalNAc to a serine or threonine residue on the protein receptor. Generates GalNAc-O-Ser/Thr structure also known as Tn antigen, which itself is immunogenic but also serves as a precursor for the synthesis of different mucin-type O-glycan core structures. Contributes to the synthesis of O-linked glycans on mucins and proteoglycans of the central nervous system. Can glycosylate both unmodified peptides and glycopeptides that already contain an O-linked GalNAc sugar. Transfers GalNAc to Thr-/Ser-rich tandem repeats GTTPSPVPTTSTTSAP of MUC5AC. Transfers GalNAc to three consecutive serine/threonine residues on SDC3 forming a triplet-Tn epitope expressed in Purkinje cells of the developing brain. May promote neurogenesis through glycosylation and stabilization of PDPN. The chain is Polypeptide N-acetylgalactosaminyltransferase 13 (Galnt13) from Rattus norvegicus (Rat).